The sequence spans 767 residues: Granule-bound starch synthase 2, chloroplastic/amyloplastic (767 aa).

A chloroplast-targeting transit peptide spans 1-45; sequence MENSILLHSGNQFHPNLPLLALRPKKLSLIHGSSREQMWRIKRVK. Disordered stretches follow at residues 160 to 204 and 226 to 268; these read KRDL…SSQE and YMPS…EKPP. Low complexity predominate over residues 172–188; it reads SRSSITASSQISSTVSS. Residues 230 to 245 are compositionally biased toward basic and acidic residues; the sequence is LRKESSASHVEQRNEN. Acidic residues predominate over residues 253–262; it reads ANEETEDPVN. Lys-290 contacts ADP-alpha-D-glucose.

Belongs to the glycosyltransferase 1 family. Bacterial/plant glycogen synthase subfamily.

Its subcellular location is the plastid. The protein localises to the chloroplast. It is found in the amyloplast. It carries out the reaction [(1-&gt;4)-alpha-D-glucosyl](n) + ADP-alpha-D-glucose = [(1-&gt;4)-alpha-D-glucosyl](n+1) + ADP + H(+). It participates in glycan biosynthesis; starch biosynthesis. Its function is as follows. Accounts for only 10 to 15% of the total soluble starch synthase activity in tubers. This Solanum tuberosum (Potato) protein is Granule-bound starch synthase 2, chloroplastic/amyloplastic (SS2).